The primary structure comprises 234 residues: MGLTFFDKARELTEELEKTQAESIHQAAKLVADSIMNDGIIQAFGSGHSYAAAIEVCGRAGGLIPSKVIMDPAGGYYESIEGVGSLLTHRLQAKPNDIFFLISNSGRNPMGIELAEWIKSQGCKLIVVTALDASQTAASRHSSGKLLYEFADVILDNRSVQGDAALELEGLEGKVCGTSSFSAVLLLQQTIYEAVELMLEKGYTPPVYRSANIDGGYEYNFAIEDKFADRIFHL.

The region spanning 31 to 205 is the SIS domain; the sequence is VADSIMNDGI…ELMLEKGYTP (175 aa).

This sequence belongs to the UPF0309 family.

This Listeria monocytogenes serovar 1/2a (strain ATCC BAA-679 / EGD-e) protein is UPF0309 protein lmo0025.